A 600-amino-acid polypeptide reads, in one-letter code: MKRTNYAGDTNEQQVGQEVVLKGWVAKRRNLGGLIFIDLWDREGIVQLVFNEKENPEAFEIANAVRNQYVLEVQGKVQLRAEKEINPDMKTGKVEVAVDEVKVLAKSETTPFDITDGVDASEDLRMKYRYLDLRRPEMMRNLKLRSKVASIVHNYYDNEGFMDVETPDLTRSTPEGARDYIVPSRVYPGHFYALPQSPQLFKQLLMAAGVDKYYQLARCFRDEDLRGDRQPEFTQIDTEMSFATPEDIQTVTEGLIKRVMKEIVGVDVKTPFPRMEWQEAMDKYGSDKPDTRFGMLIHDLSDIVKDSSFKVFANTVADGNYVRAIRVPGGADKYSRKDISKYEEYIKRFGAKGLAWVKVTADGYNGPVAKFLNDQVAQINEEMDAKEGDLILFVAGSFHVVSDSLGYLRRAIAEELDMIKPDQWNYLWVVNWPMFEYDEGFGKWIAAHHPFTMLNEEDLHYLEDGEDPHKAHAQSYDIILNGNEIGGGSIRIHDPKIQEKVLKALGYTKERAEARFGFLLKALTMGMPPEGGLAFGLDRWVMLLAQADSIRDVIPFPKNSKAVEPLTAAPGKVSEQQLDDLKIEFDEKIDYKLDQDPDEQ.

An L-aspartate-binding site is contributed by E175. Residues 199 to 202 are aspartate; sequence QLFK. Residue R221 coordinates L-aspartate. ATP-binding positions include 221 to 223 and Q230; that span reads RDE. Residue H448 coordinates L-aspartate. E484 is an ATP binding site. Residue R491 participates in L-aspartate binding. Residue 536–539 coordinates ATP; that stretch reads GLDR.

This sequence belongs to the class-II aminoacyl-tRNA synthetase family. Type 1 subfamily. As to quaternary structure, homodimer.

It localises to the cytoplasm. The catalysed reaction is tRNA(Asp) + L-aspartate + ATP = L-aspartyl-tRNA(Asp) + AMP + diphosphate. In terms of biological role, catalyzes the attachment of L-aspartate to tRNA(Asp) in a two-step reaction: L-aspartate is first activated by ATP to form Asp-AMP and then transferred to the acceptor end of tRNA(Asp). This chain is Aspartate--tRNA ligase, found in Limosilactobacillus reuteri (strain DSM 20016) (Lactobacillus reuteri).